A 134-amino-acid chain; its full sequence is Methylmalonyl-CoA decarboxylase subunit gamma (134 aa).

Positions 28–38 are enriched in low complexity; that stretch reads APAARPAAAPA. Positions 28 to 67 are disordered; the sequence is APAARPAAAPAPAAPKPAAAPAPAPAPKTTAAGAGAGANT. Pro residues predominate over residues 39–53; the sequence is PAAPKPAAAPAPAPA. Residues 54–67 show a composition bias toward low complexity; that stretch reads PKTTAAGAGAGANT. Residues 58-134 form the Biotinyl-binding domain; that stretch reads AAGAGAGANT…NAGDILVVLS (77 aa). N6-biotinyllysine is present on lysine 100.

The methylmalonyl-CoA decarboxylase is composed of four subunits: the carboxyltransferase alpha subunit (MmdA), the tunnel beta subunit (MmdB), the biotin-containing gamma subunit (MmdC) and the delta subunit (MmdD). Requires biotin as cofactor.

The protein localises to the cell membrane. The catalysed reaction is (S)-methylmalonyl-CoA + Na(+)(in) + H(+)(out) = propanoyl-CoA + Na(+)(out) + CO2. Its function is as follows. Biotin-containing subunit of the sodium ion pump methylmalonyl-CoA decarboxylase, which converts the chemical energy of a decarboxylation reaction into an electrochemical gradient of Na(+) ions across the cytoplasmic membrane, thereby creating a sodium ion motive force that is used for ATP synthesis. The protein is Methylmalonyl-CoA decarboxylase subunit gamma of Propionigenium modestum.